We begin with the raw amino-acid sequence, 350 residues long: UBX domain-containing protein 2B (350 aa).

The segment covering methionine 1–glycine 29 has biased composition (acidic residues). The interval methionine 1–arginine 46 is disordered. Over residues glycine 32–leucine 45 the composition is skewed to basic and acidic residues. Residues glutamate 160–isoleucine 225 enclose the SEP domain. The region spanning glutamate 271–arginine 348 is the UBX domain.

It belongs to the NSFL1C family.

It is found in the nucleus. The protein resides in the cytoplasm. It localises to the cytosol. The protein localises to the endoplasmic reticulum. Its subcellular location is the golgi apparatus. It is found in the cytoskeleton. The protein resides in the microtubule organizing center. It localises to the centrosome. Functionally, adapter protein required for Golgi and endoplasmic reticulum biogenesis. Involved in Golgi and endoplasmic reticulum maintenance during interphase and in their reassembly at the end of mitosis. Regulates the centrosomal levels of kinase aurka-a/Aurora A during mitotic progression by promoting aurka-a removal from centrosomes in prophase. Also, regulates spindle orientation during mitosis. This chain is UBX domain-containing protein 2B (ubxn2b), found in Xenopus laevis (African clawed frog).